A 118-amino-acid polypeptide reads, in one-letter code: Large ribosomal subunit protein bL19 (118 aa).

It belongs to the bacterial ribosomal protein bL19 family.

Functionally, this protein is located at the 30S-50S ribosomal subunit interface and may play a role in the structure and function of the aminoacyl-tRNA binding site. This is Large ribosomal subunit protein bL19 from Lactiplantibacillus plantarum (strain ATCC BAA-793 / NCIMB 8826 / WCFS1) (Lactobacillus plantarum).